Consider the following 234-residue polypeptide: Putative methyltransferase-like protein 15P1 (234 aa).

S-adenosyl-L-methionine-binding positions include 100–102 (GGH), Asp-119, Phe-146, Asp-169, and Gln-176.

This sequence belongs to the methyltransferase superfamily. RsmH family.

Its function is as follows. Probable S-adenosyl-L-methionine-dependent methyltransferase. The sequence is that of Putative methyltransferase-like protein 15P1 (METTL15P1) from Homo sapiens (Human).